The chain runs to 1241 residues: Sterol 3-beta-glucosyltransferase (1241 aa).

Acidic residues predominate over residues 1-11; that stretch reads MSGIESTEEPC. 2 disordered regions span residues 1 to 97 and 124 to 189; these read MSGI…KPSI and DQQV…TLRK. Over residues 25–34 the composition is skewed to basic and acidic residues; that stretch reads PEERQTRKDS. The span at 136–155 shows a compositional bias: acidic residues; that stretch reads ESEDQQADESSDEQEDDDQD. Positions 220-267 constitute a GRAM 1 domain; sequence NKLKRTFDISDTDVFISDYPCWLMGDVLLQGHLYITKHHILFFAFLPK. A PH domain is found at 271–373; that stretch reads SISKSGALTT…WVSSLKKHIF (103 aa). The tract at residues 499–556 is disordered; the sequence is DDFSQEQESAESSKPVSDDEIVSADDNQELEEKQPQDNLANAEKENHDKVSRANSRRT. Residues 516 to 527 show a composition bias toward acidic residues; that stretch reads DDEIVSADDNQE. Over residues 540 to 549 the composition is skewed to basic and acidic residues; the sequence is AEKENHDKVS. The GRAM 2 domain maps to 609–675; that stretch reads ERFRKHFSLT…SDIENVNKEK (67 aa). Positions 720–741 are disordered; that stretch reads KGSTDSSPPNASEGSSDESCNL. Positions 723–741 are enriched in polar residues; that stretch reads TDSSPPNASEGSSDESCNL. The UDP-alpha-D-glucose site is built by Ser-797, Arg-798, Asp-800, Asn-1071, Val-1098, His-1100, His-1113, Ser-1116, Gly-1117, Thr-1118, Asp-1137, and Gln-1138.

The protein belongs to the glycosyltransferase 28 family.

It is found in the cytoplasm. Its subcellular location is the preautophagosomal structure membrane. It catalyses the reaction a sterol + UDP-alpha-D-glucose = a sterol 3-beta-D-glucoside + UDP + H(+). The catalysed reaction is ergosterol + UDP-alpha-D-glucose = ergosteryl 3-beta-D-glucoside + UDP + H(+). Sterol glycosyltransferase responsible for the glycosylation of ergosterol to form ergosterol-glucoside. Mediates autophagic degradation of peroxisomes (pexophagy). The protein is Sterol 3-beta-glucosyltransferase of Pichia angusta (Yeast).